A 307-amino-acid polypeptide reads, in one-letter code: NAD kinase 1 (307 aa).

Residue D67 is the Proton acceptor of the active site. NAD(+) is bound by residues 67 to 68 (DG), 149 to 150 (ND), R179, and D181.

This sequence belongs to the NAD kinase family. It depends on a divalent metal cation as a cofactor.

The protein localises to the cytoplasm. It catalyses the reaction NAD(+) + ATP = ADP + NADP(+) + H(+). Involved in the regulation of the intracellular balance of NAD and NADP, and is a key enzyme in the biosynthesis of NADP. Catalyzes specifically the phosphorylation on 2'-hydroxyl of the adenosine moiety of NAD to yield NADP. The sequence is that of NAD kinase 1 from Prochlorococcus marinus (strain SARG / CCMP1375 / SS120).